We begin with the raw amino-acid sequence, 216 residues long: MFLTSVVSLVVGAISCVSAAPAAASELMQMTPRNSCYGGGLYSSYWADYGNTRYSCGAGGHYDLSWGNGGNVVAGRGWKPASPRAVTYSGSWQCNGNCYLSVYGWTINPLVEYYIVENYGNYNPSAGAQRRGQVTADGSIYDIYISTQHNQPSILGTNTFHQYWSIRRNKRVGGTVSTGVHFNAWRSLGMPLGTYDYMIVATEGFRSSGSASITVS.

A signal peptide spans Met1–Ala19. The 188-residue stretch at Gln29 to Ser216 folds into the GH11 domain. Catalysis depends on Glu112, which acts as the Nucleophile. The Proton donor role is filled by Glu203.

Belongs to the glycosyl hydrolase 11 (cellulase G) family.

It is found in the secreted. The catalysed reaction is Endohydrolysis of (1-&gt;4)-beta-D-xylosidic linkages in xylans.. Its pathway is glycan degradation; xylan degradation. Endo-1,4-beta-xylanase involved in the hydrolysis of xylan, a major structural heterogeneous polysaccharide found in plant biomass representing the second most abundant polysaccharide in the biosphere, after cellulose. The sequence is that of Endo-1,4-beta-xylanase 1 (xyl1) from Claviceps purpurea (Ergot fungus).